Consider the following 143-residue polypeptide: MIRKSKKITKMRGSRTCGYGEAKKHRGAGHRGGRGNAGHQKHKWLSVCKFNPDYFGKYGFNRNPGLIKQLETINIGELEEYILKYKDAFQVEDGKVVVDATEIGYEKVLGKGRISTAMVVKAVEFSEGAKEKIEAAGGEFVEL.

2 stretches are compositionally biased toward basic residues: residues 1–13 and 23–38; these read MIRKSKKITKMRG and KKHRGAGHRGGRGNAG. The interval 1–38 is disordered; it reads MIRKSKKITKMRGSRTCGYGEAKKHRGAGHRGGRGNAG.

It belongs to the universal ribosomal protein uL15 family. Part of the 50S ribosomal subunit.

Its function is as follows. Binds to the 23S rRNA. The chain is Large ribosomal subunit protein uL15 from Methanococcus maripaludis (strain C7 / ATCC BAA-1331).